The primary structure comprises 104 residues: Large ribosomal subunit protein uL24 (104 aa).

The segment at 82-104 (RVGYRFDENGKKVRVSRRNGKDI) is disordered. Basic residues predominate over residues 93–104 (KVRVSRRNGKDI).

It belongs to the universal ribosomal protein uL24 family. In terms of assembly, part of the 50S ribosomal subunit.

Its function is as follows. One of two assembly initiator proteins, it binds directly to the 5'-end of the 23S rRNA, where it nucleates assembly of the 50S subunit. In terms of biological role, one of the proteins that surrounds the polypeptide exit tunnel on the outside of the subunit. The chain is Large ribosomal subunit protein uL24 from Corynebacterium glutamicum (strain R).